Reading from the N-terminus, the 291-residue chain is 33 kDa chaperonin (291 aa).

2 cysteine pairs are disulfide-bonded: cysteine 235-cysteine 237 and cysteine 268-cysteine 271.

It belongs to the HSP33 family. In terms of processing, under oxidizing conditions two disulfide bonds are formed involving the reactive cysteines. Under reducing conditions zinc is bound to the reactive cysteines and the protein is inactive.

It is found in the cytoplasm. In terms of biological role, redox regulated molecular chaperone. Protects both thermally unfolding and oxidatively damaged proteins from irreversible aggregation. Plays an important role in the bacterial defense system toward oxidative stress. The sequence is that of 33 kDa chaperonin from Bacillus pumilus (strain SAFR-032).